The chain runs to 117 residues: MQNIPPQVQAMLGQLESYQQQLQLVIQQKQKVQADLNEAKKALEEIEALPDDAQVYKTVGTLIVKTTKEKALQELKEKVETLEVRLNALNRQEQKINEKVKELTQKIQAALRPPTAG.

The protein belongs to the prefoldin subunit beta family. In terms of assembly, heterohexamer of two alpha and four beta subunits.

It localises to the cytoplasm. Functionally, molecular chaperone capable of stabilizing a range of proteins. Seems to fulfill an ATP-independent, HSP70-like function in archaeal de novo protein folding. This chain is Prefoldin subunit beta (pfdB), found in Pyrococcus abyssi (strain GE5 / Orsay).